Consider the following 439-residue polypeptide: Serine/threonine-protein kinase 2 (439 aa).

In terms of domain architecture, Protein kinase spans 87 to 439 (NDDFYHISTG…IFSDWINGGN (353 aa)). Residues 93–101 (ISTGGYGIV) and Lys-117 each bind ATP. Asp-307 (proton acceptor) is an active-site residue.

The protein belongs to the protein kinase superfamily. Ser/Thr protein kinase family. Poxviruses subfamily. Post-translationally, phosphorylated in vivo. Autophosphorylated in vitro.

It localises to the host endoplasmic reticulum. The protein resides in the host endoplasmic reticulum-Golgi intermediate compartment. It carries out the reaction L-seryl-[protein] + ATP = O-phospho-L-seryl-[protein] + ADP + H(+). It catalyses the reaction L-threonyl-[protein] + ATP = O-phospho-L-threonyl-[protein] + ADP + H(+). Essential serine-protein kinase involved in the early stage of virion morphogenesis. The polypeptide is Serine/threonine-protein kinase 2 (OPG054) (Vaccinia virus (strain Ankara) (VACV)).